A 706-amino-acid chain; its full sequence is Solute carrier organic anion transporter family member 6C1 (706 aa).

Residues 1-24 (MAHVRNKKSDDKKAMVVAKEDTNK) form a disordered region. Topologically, residues 1-94 (MAHVRNKKSD…PFVQRFNNID (94 aa)) are cytoplasmic. Basic and acidic residues predominate over residues 7–24 (KKSDDKKAMVVAKEDTNK). A helical transmembrane segment spans residues 95–118 (GFMTLYVAAVLIHGALFAVVDMTL). Residues 119–130 (NIYQVQFSLTRT) lie on the Extracellular side of the membrane. The helical transmembrane segment at 131-151 (EWYLMDFSDYIASFVVAIIIA) threads the bilayer. The Cytoplasmic portion of the chain corresponds to 152–159 (HFGSKGNR). A helical membrane pass occupies residues 160–180 (TRWIAASCILMGLESMLFAFP). Topologically, residues 181-218 (FFTYEIIIPGRQSIELCMEENEKRNIICGNSVPNRSKC) are extracellular. Asn-214 is a glycosylation site (N-linked (GlcNAc...) asparagine). Residues 219–241 (IYFHIAGQCIHGIAGMPIYILGI) traverse the membrane as a helical segment. The Cytoplasmic portion of the chain corresponds to 242–253 (TFIFDHIPTSSC). A helical membrane pass occupies residues 254–277 (GFYLAIGHSAYLIGYLLGMVGGLQ). At 278–301 (NFQPPPKEKTVEIEPAKVYQLLQS) the chain is on the extracellular side. Residues 302 to 324 (GWWKTFLIIAAISFCVSFMMVCF) form a helical membrane-spanning segment. Residues 325 to 374 (PTSLPGAHKLRLAKRKEPPTIDRRLKDMKIQPHLKGFLHNIWHILKNPLM) are Cytoplasmic-facing. Residues 375 to 396 (LTQAICKVSEYLTFNTSLYFLP) traverse the membrane as a helical segment. The Extracellular portion of the chain corresponds to 397 to 410 (HHLQTQFLITPGIA). Residues 411–432 (SLLTGAFVLPGGIIGHFLGGLI) traverse the membrane as a helical segment. Topologically, residues 433–445 (VDRLEMTNKNKLK) are cytoplasmic. The chain crosses the membrane as a helical span at residues 446–466 (FTLVTTVVSVGLFLLIFFVEC). The Extracellular portion of the chain corresponds to 467–565 (QTTTFAGINE…IAGTCDSDCL (99 aa)). The Kazal-like domain occupies 485-540 (GNLTADCNEYCDCTTSLYTSICGRDEKEYFSPCFAGCKATKVSQTEKTYYNCSCIK). Asn-486 is a glycosylation site (N-linked (GlcNAc...) asparagine). Cystine bridges form between Cys-491/Cys-521, Cys-497/Cys-517, and Cys-506/Cys-538. N-linked (GlcNAc...) asparagine glycosylation is present at Asn-535. A helical transmembrane segment spans residues 566-589 (KLPLFFAFYFSATVFSNMCSIPVI). Over 590–604 (SIILQSVPANFTSLS) the chain is Cytoplasmic. A helical transmembrane segment spans residues 605–624 (LGVTYAIVKFVASVPAPLLF). The Extracellular segment spans residues 625–652 (RLSSAIACIYWDNNRCGGKERCWIYNKN). Residues 653–675 (ILVYEFMGIWMSSQLIIVLLNIY) form a helical membrane-spanning segment. The Cytoplasmic portion of the chain corresponds to 676–706 (AIQIHDVVVHGEITESKTTVKDVKEQKERKA).

Belongs to the organo anion transporter (TC 2.A.60) family. As to quaternary structure, component of the CatSper complex or CatSpermasome composed of the core pore-forming members CATSPER1, CATSPER2, CATSPER3 and CATSPER4 as well as auxiliary members CATSPERB, CATSPERG2, CATSPERD, CATSPERE, CATSPERZ, C2CD6/CATSPERT, SLCO6C1, TMEM249, TMEM262 and EFCAB9. HSPA1 may be an additional auxiliary complex member. The core complex members CATSPER1, CATSPER2, CATSPER3 and CATSPER4 form a heterotetrameric channel. The auxiliary CATSPERB, CATSPERG2, CATSPERD and CATSPERE subunits form a pavilion-like structure over the pore which stabilizes the complex through interactions with CATSPER4, CATSPER3, CATSPER1 and CATSPER2 respectively. SLCO6C1 interacts with CATSPERE and TMEM262/CATSPERH interacts with CATSPERB, further stabilizing the complex. C2CD6/CATSPERT interacts at least with CATSPERD and is required for targeting the CatSper complex in the flagellar membrane.

The protein resides in the cell projection. The protein localises to the cilium. Its subcellular location is the flagellum membrane. Functionally, auxiliary component of the CatSper complex, a complex involved in sperm cell hyperactivation. This chain is Solute carrier organic anion transporter family member 6C1, found in Mus musculus (Mouse).